The chain runs to 109 residues: Small ribosomal subunit protein uS17A (109 aa).

It belongs to the universal ribosomal protein uS17 family. Part of the 30S ribosomal subunit.

Functionally, one of the primary rRNA binding proteins, it binds specifically to the 5'-end of 16S ribosomal RNA. The chain is Small ribosomal subunit protein uS17A from Methanosarcina acetivorans (strain ATCC 35395 / DSM 2834 / JCM 12185 / C2A).